The primary structure comprises 81 residues: Exodeoxyribonuclease 7 small subunit (81 aa).

This sequence belongs to the XseB family. As to quaternary structure, heterooligomer composed of large and small subunits.

The protein localises to the cytoplasm. The enzyme catalyses Exonucleolytic cleavage in either 5'- to 3'- or 3'- to 5'-direction to yield nucleoside 5'-phosphates.. In terms of biological role, bidirectionally degrades single-stranded DNA into large acid-insoluble oligonucleotides, which are then degraded further into small acid-soluble oligonucleotides. This chain is Exodeoxyribonuclease 7 small subunit, found in Ruegeria sp. (strain TM1040) (Silicibacter sp.).